We begin with the raw amino-acid sequence, 213 residues long: Cell division protein SepF 2 (213 aa).

The tract at residues 16–89 (EDDGYDGRGF…ASLAAESSRP (74 aa)) is disordered. The span at 27-39 (PDDDFEPELDPEP) shows a compositional bias: acidic residues.

This sequence belongs to the SepF family. Homodimer. Interacts with FtsZ.

It localises to the cytoplasm. Cell division protein that is part of the divisome complex and is recruited early to the Z-ring. Probably stimulates Z-ring formation, perhaps through the cross-linking of FtsZ protofilaments. Its function overlaps with FtsA. This Streptomyces coelicolor (strain ATCC BAA-471 / A3(2) / M145) protein is Cell division protein SepF 2.